The sequence spans 193 residues: Erythropoietin (193 aa).

Residues 1–27 (MGVHECPAWLWLLLSLLSLPLGLPVLG) form the signal peptide. 2 disulfides stabilise this stretch: C34–C188 and C56–C60. N51 is a glycosylation site (N-linked (GlcNAc...) asparagine). Residues N65 and N110 are each glycosylated (N-linked (GlcNAc...) asparagine). A glycan (O-linked (GalNAc...) serine) is linked at S153.

This sequence belongs to the EPO/TPO family. Produced by kidney or liver of adult mammals and by liver of fetal or neonatal mammals.

It is found in the secreted. In terms of biological role, hormone involved in the regulation of erythrocyte proliferation and differentiation and the maintenance of a physiological level of circulating erythrocyte mass. Binds to EPOR leading to EPOR dimerization and JAK2 activation thereby activating specific downstream effectors, including STAT1 and STAT3. The sequence is that of Erythropoietin (EPO) from Homo sapiens (Human).